A 348-amino-acid chain; its full sequence is Holliday junction branch migration complex subunit RuvB (348 aa).

The segment at 1 to 182 is large ATPase domain (RuvB-L); sequence MRIELLNTPA…FGINSRFDYY (182 aa). ATP is bound by residues I21, R22, G63, K66, T67, T68, 129–131, R172, Y182, and R219; that span reads EDF. A Mg(2+)-binding site is contributed by T67. Residues 183 to 253 are small ATPAse domain (RuvB-S); the sequence is SADLLEKIII…IAMTTLDCLE (71 aa). The tract at residues 256-348 is head domain (RuvB-H); the sequence is EEGLDDMDKK…EFPLEDDQRQ (93 aa). DNA is bound by residues R311 and R316.

It belongs to the RuvB family. Homohexamer. Forms an RuvA(8)-RuvB(12)-Holliday junction (HJ) complex. HJ DNA is sandwiched between 2 RuvA tetramers; dsDNA enters through RuvA and exits via RuvB. An RuvB hexamer assembles on each DNA strand where it exits the tetramer. Each RuvB hexamer is contacted by two RuvA subunits (via domain III) on 2 adjacent RuvB subunits; this complex drives branch migration. In the full resolvosome a probable DNA-RuvA(4)-RuvB(12)-RuvC(2) complex forms which resolves the HJ.

The protein resides in the cytoplasm. It carries out the reaction ATP + H2O = ADP + phosphate + H(+). In terms of biological role, the RuvA-RuvB-RuvC complex processes Holliday junction (HJ) DNA during genetic recombination and DNA repair, while the RuvA-RuvB complex plays an important role in the rescue of blocked DNA replication forks via replication fork reversal (RFR). RuvA specifically binds to HJ cruciform DNA, conferring on it an open structure. The RuvB hexamer acts as an ATP-dependent pump, pulling dsDNA into and through the RuvAB complex. RuvB forms 2 homohexamers on either side of HJ DNA bound by 1 or 2 RuvA tetramers; 4 subunits per hexamer contact DNA at a time. Coordinated motions by a converter formed by DNA-disengaged RuvB subunits stimulates ATP hydrolysis and nucleotide exchange. Immobilization of the converter enables RuvB to convert the ATP-contained energy into a lever motion, pulling 2 nucleotides of DNA out of the RuvA tetramer per ATP hydrolyzed, thus driving DNA branch migration. The RuvB motors rotate together with the DNA substrate, which together with the progressing nucleotide cycle form the mechanistic basis for DNA recombination by continuous HJ branch migration. Branch migration allows RuvC to scan DNA until it finds its consensus sequence, where it cleaves and resolves cruciform DNA. The chain is Holliday junction branch migration complex subunit RuvB from Chlorobium limicola (strain DSM 245 / NBRC 103803 / 6330).